The sequence spans 202 residues: Small ribosomal subunit protein uS4 (202 aa).

The segment at 23–42 is disordered; that stretch reads RKNARRAYAPGQHGQARKKR. The S4 RNA-binding domain occupies 90 to 153; it reads MRLDNTVFRL…RSQDLVKRNM (64 aa).

Belongs to the universal ribosomal protein uS4 family. In terms of assembly, part of the 30S ribosomal subunit. Contacts protein S5. The interaction surface between S4 and S5 is involved in control of translational fidelity.

Its function is as follows. One of the primary rRNA binding proteins, it binds directly to 16S rRNA where it nucleates assembly of the body of the 30S subunit. In terms of biological role, with S5 and S12 plays an important role in translational accuracy. This chain is Small ribosomal subunit protein uS4, found in Microcystis aeruginosa (strain NIES-843 / IAM M-2473).